A 222-amino-acid chain; its full sequence is Probable nicotinate-nucleotide adenylyltransferase (222 aa).

It belongs to the NadD family.

The enzyme catalyses nicotinate beta-D-ribonucleotide + ATP + H(+) = deamido-NAD(+) + diphosphate. It participates in cofactor biosynthesis; NAD(+) biosynthesis; deamido-NAD(+) from nicotinate D-ribonucleotide: step 1/1. Catalyzes the reversible adenylation of nicotinate mononucleotide (NaMN) to nicotinic acid adenine dinucleotide (NaAD). The protein is Probable nicotinate-nucleotide adenylyltransferase of Xylella fastidiosa (strain M23).